Reading from the N-terminus, the 322-residue chain is Protein mono-ADP-ribosyltransferase PARP16 (322 aa).

Residues 1-287 (MQLSNRAAAR…RASSQLSWLS (287 aa)) lie on the Cytoplasmic side of the membrane. A PARP alpha-helical domain is found at 5–91 (NRAAAREAAS…AWDLVSWILS (87 aa)). Residues 94-279 (ILTIHSAKKA…VYSQKQPKRA (186 aa)) form the PARP catalytic domain. Residues H152, Y182, and Y254 each coordinate NAD(+). Residues 288-308 (SHWFVIMMSLYLLLLLIVSVT) form a helical membrane-spanning segment. Over 309–322 (NSSVFHHFWNRVKR) the chain is Lumenal.

It belongs to the ARTD/PARP family. In terms of assembly, interacts with KPNB1. In terms of processing, auto-mono-ADP-ribosylated.

Its subcellular location is the endoplasmic reticulum membrane. The enzyme catalyses L-aspartyl-[protein] + NAD(+) = 4-O-(ADP-D-ribosyl)-L-aspartyl-[protein] + nicotinamide. The catalysed reaction is L-lysyl-[protein] + NAD(+) = N(6)-(ADP-D-ribosyl)-L-lysyl-[protein] + nicotinamide + H(+). It carries out the reaction L-glutamyl-[protein] + NAD(+) = 5-O-(ADP-D-ribosyl)-L-glutamyl-[protein] + nicotinamide. With respect to regulation, in absence of activation signal, PARP16 is autoinhibited by the PARP alpha-helical domain (also named HD region), which prevents effective NAD(+)-binding. Activity is highly stimulated by signals, which unfold the PARP alpha-helical domain, relieving autoinhibition. Intracellular mono-ADP-ribosyltransferase that plays a role in different processes, such as protein translation and unfolded protein response (UPR), through the mono-ADP-ribosylation of proteins involved in those processes. Acts as an inhibitor of protein translation by catalyzing mono-ADP-ribosylation of ribosomal subunits, such as RPL14 and RPS6, thereby inhibiting polysome assembly and mRNA loading. Mono-ADP-ribosylation of ribosomal subunits is promoted by NMNAT2. Involved in the unfolded protein response (UPR) by ADP-ribosylating and activating EIF2AK3 and ERN1, two important UPR effectors. May also mediate mono-ADP-ribosylation of karyopherin KPNB1 a nuclear import factor. May not modify proteins on arginine or cysteine residues compared to other mono-ADP-ribosyltransferases. The polypeptide is Protein mono-ADP-ribosyltransferase PARP16 (Mus musculus (Mouse)).